Here is a 427-residue protein sequence, read N- to C-terminus: Acetylornithine aminotransferase, mitochondrial (427 aa).

Lys-279 is subject to N6-(pyridoxal phosphate)lysine.

It belongs to the class-III pyridoxal-phosphate-dependent aminotransferase family. The cofactor is pyridoxal 5'-phosphate.

It is found in the mitochondrion matrix. The enzyme catalyses N(2)-acetyl-L-ornithine + 2-oxoglutarate = N-acetyl-L-glutamate 5-semialdehyde + L-glutamate. The protein operates within amino-acid biosynthesis; L-arginine biosynthesis; N(2)-acetyl-L-ornithine from L-glutamate: step 4/4. The polypeptide is Acetylornithine aminotransferase, mitochondrial (ARG8) (Candida glabrata (strain ATCC 2001 / BCRC 20586 / JCM 3761 / NBRC 0622 / NRRL Y-65 / CBS 138) (Yeast)).